The following is a 221-amino-acid chain: Phosphatidylserine decarboxylase proenzyme (221 aa).

The active-site Schiff-base intermediate with substrate; via pyruvic acid is Ser189. Ser189 is subject to Pyruvic acid (Ser); by autocatalysis.

The protein belongs to the phosphatidylserine decarboxylase family. PSD-A subfamily. In terms of assembly, heterodimer of a large membrane-associated beta subunit and a small pyruvoyl-containing alpha subunit. The cofactor is pyruvate. In terms of processing, is synthesized initially as an inactive proenzyme. Formation of the active enzyme involves a self-maturation process in which the active site pyruvoyl group is generated from an internal serine residue via an autocatalytic post-translational modification. Two non-identical subunits are generated from the proenzyme in this reaction, and the pyruvate is formed at the N-terminus of the alpha chain, which is derived from the carboxyl end of the proenzyme. The post-translation cleavage follows an unusual pathway, termed non-hydrolytic serinolysis, in which the side chain hydroxyl group of the serine supplies its oxygen atom to form the C-terminus of the beta chain, while the remainder of the serine residue undergoes an oxidative deamination to produce ammonia and the pyruvoyl prosthetic group on the alpha chain.

The protein localises to the cell membrane. The catalysed reaction is a 1,2-diacyl-sn-glycero-3-phospho-L-serine + H(+) = a 1,2-diacyl-sn-glycero-3-phosphoethanolamine + CO2. The protein operates within phospholipid metabolism; phosphatidylethanolamine biosynthesis; phosphatidylethanolamine from CDP-diacylglycerol: step 2/2. Catalyzes the formation of phosphatidylethanolamine (PtdEtn) from phosphatidylserine (PtdSer). In Porphyromonas gingivalis (strain ATCC 33277 / DSM 20709 / CIP 103683 / JCM 12257 / NCTC 11834 / 2561), this protein is Phosphatidylserine decarboxylase proenzyme.